Here is a 402-residue protein sequence, read N- to C-terminus: Tyrosine--tRNA ligase (402 aa).

The 'HIGH' region signature appears at 48–57 (PSRPDLHLGH). The 'KMSKS' region signature appears at 232-236 (KMSKS). Lys235 contributes to the ATP binding site. The S4 RNA-binding domain occupies 339 to 402 (MPIIDLLTLL…KRKFFKIRSK (64 aa)).

Belongs to the class-I aminoacyl-tRNA synthetase family. TyrS type 2 subfamily. Homodimer.

It localises to the cytoplasm. It carries out the reaction tRNA(Tyr) + L-tyrosine + ATP = L-tyrosyl-tRNA(Tyr) + AMP + diphosphate + H(+). Functionally, catalyzes the attachment of tyrosine to tRNA(Tyr) in a two-step reaction: tyrosine is first activated by ATP to form Tyr-AMP and then transferred to the acceptor end of tRNA(Tyr). In Chlorobium chlorochromatii (strain CaD3), this protein is Tyrosine--tRNA ligase.